Here is a 429-residue protein sequence, read N- to C-terminus: MDRIHITGGAPLHGEIPISGAKNAALPLMIASLLTGETVELANVPRLADIASLLRILGNHGVDHMVVGKRPGQTAETGQTIRLTASNVIDTTAPYELVSTMRASFWVIAPLLARFGEARVSMPGGCAIGTRPVDLLLMAMERLGATIEIDGGYVVARTRNGLRGAEIVFPKVTVGGTHVALMAASLAQGTTVIDNAAREPEVVDLAECLSKMGARIEGAGTPRIVVEGVSRLGGARHEVLPDRIETGTYAMAVAMTGGDVILRDTRADLLHSALDVLATTGTEVTALPNGIRVRRNGAGVAAVDVTTDPFPGFPTDLQAQFMALMTKARGQSRIRETIFENRFMHVQELARLGARIRLEGDLAVVDGVERLRGAPVMATDLRASVSLVIAGLAAEGETIINRVYHLDRGFEALEAKLSRCGAQIRRERV.

A phosphoenolpyruvate-binding site is contributed by 22–23; that stretch reads KN. R102 serves as a coordination point for UDP-N-acetyl-alpha-D-glucosamine. Residue C126 is the Proton donor of the active site. C126 carries the 2-(S-cysteinyl)pyruvic acid O-phosphothioketal modification. UDP-N-acetyl-alpha-D-glucosamine contacts are provided by residues 131 to 135, D316, and I338; that span reads RPVDL.

This sequence belongs to the EPSP synthase family. MurA subfamily.

The protein localises to the cytoplasm. The enzyme catalyses phosphoenolpyruvate + UDP-N-acetyl-alpha-D-glucosamine = UDP-N-acetyl-3-O-(1-carboxyvinyl)-alpha-D-glucosamine + phosphate. It participates in cell wall biogenesis; peptidoglycan biosynthesis. Functionally, cell wall formation. Adds enolpyruvyl to UDP-N-acetylglucosamine. In Methylobacterium nodulans (strain LMG 21967 / CNCM I-2342 / ORS 2060), this protein is UDP-N-acetylglucosamine 1-carboxyvinyltransferase.